The following is a 507-amino-acid chain: MKRALLSVSDKTGLVSFAKGLIDRGFELVSTGGTHRELAAAGIAVTSVEEVTGFPEMLDGRVKTLHPKIHAGILARRDDPAHMEALADHDIQPVDLVCVNLYPFAATIKRPDVTRAEAIEQIDIGGPSALRAAAKNSDSVWAVVDPADYEAVLTGLDQDDAHLRQKLAAKVFAITAAYDAQIVHYLDPEPFPEHFTPTYTKRQDLRYGENSHQQAAFYVEPDPNPTSLAAAKQLHGKELSYNNIKDADAALAMLREFSEPAVVAVKHMNPCGIGLGKTIEGAWDKAYAADPMSIFGGIIALNRPVDLATAEKMHKLFLEIIMAPAFDDDAYAVLAKKKNVRLLTINTADTPAELGTETTAIYGGLLIQARDNQTETPADLTVVTTVKPTDEQLKALAFAQTVVKHVKSNAIVVAQADQTLGIGAGQMNRIGSVELALTQAQQNDNFAGAVMASDAFFPMDDCVDYAAKHDIKAIIQPGGSIRDKDSIEKANQYGIAMVTTGVRHFRH.

The region spanning 1-144 is the MGS-like domain; the sequence is MKRALLSVSD…KNSDSVWAVV (144 aa).

The protein belongs to the PurH family.

The catalysed reaction is (6R)-10-formyltetrahydrofolate + 5-amino-1-(5-phospho-beta-D-ribosyl)imidazole-4-carboxamide = 5-formamido-1-(5-phospho-D-ribosyl)imidazole-4-carboxamide + (6S)-5,6,7,8-tetrahydrofolate. It carries out the reaction IMP + H2O = 5-formamido-1-(5-phospho-D-ribosyl)imidazole-4-carboxamide. The protein operates within purine metabolism; IMP biosynthesis via de novo pathway; 5-formamido-1-(5-phospho-D-ribosyl)imidazole-4-carboxamide from 5-amino-1-(5-phospho-D-ribosyl)imidazole-4-carboxamide (10-formyl THF route): step 1/1. Its pathway is purine metabolism; IMP biosynthesis via de novo pathway; IMP from 5-formamido-1-(5-phospho-D-ribosyl)imidazole-4-carboxamide: step 1/1. The sequence is that of Bifunctional purine biosynthesis protein PurH from Lacticaseibacillus paracasei (strain ATCC 334 / BCRC 17002 / CCUG 31169 / CIP 107868 / KCTC 3260 / NRRL B-441) (Lactobacillus paracasei).